The chain runs to 256 residues: MAVISMKQLLEAGVHFGHQTRRWNPKMAKYIFTERNGIHVIDLQQTVKLADQAYEFVRDAAANDAVILFVGTKKQAAEAVAEEAKRAGQYFINHRWLGGTLTNWGTIQKRIARLKEIKRMEEEGTFELLPKKEVALLNKQRARLEKFLGGIEDMPRIPDVMYVVDPHKEQIAVKEAKKLGIPVVAMVDTNADPDDIDVIIPANDDAIRAVKLITSKLADAVIEGRQGEDADVDFAQEAQADSIEEIVEVVEGSKND.

This sequence belongs to the universal ribosomal protein uS2 family.

In Streptococcus agalactiae serotype Ia (strain ATCC 27591 / A909 / CDC SS700), this protein is Small ribosomal subunit protein uS2.